The primary structure comprises 188 residues: Elongation factor P (188 aa).

This sequence belongs to the elongation factor P family.

Its subcellular location is the cytoplasm. It participates in protein biosynthesis; polypeptide chain elongation. In terms of biological role, involved in peptide bond synthesis. Stimulates efficient translation and peptide-bond synthesis on native or reconstituted 70S ribosomes in vitro. Probably functions indirectly by altering the affinity of the ribosome for aminoacyl-tRNA, thus increasing their reactivity as acceptors for peptidyl transferase. This Methylobacterium sp. (strain 4-46) protein is Elongation factor P.